A 377-amino-acid chain; its full sequence is uncharacterized protein (377 aa).

This is an uncharacterized protein from Caenorhabditis elegans.